A 150-amino-acid chain; its full sequence is Ribosome maturation factor RimP (150 aa).

This sequence belongs to the RimP family.

The protein resides in the cytoplasm. Functionally, required for maturation of 30S ribosomal subunits. The polypeptide is Ribosome maturation factor RimP (Acidithiobacillus ferrooxidans (strain ATCC 23270 / DSM 14882 / CIP 104768 / NCIMB 8455) (Ferrobacillus ferrooxidans (strain ATCC 23270))).